Reading from the N-terminus, the 495-residue chain is Mothers against decapentaplegic homolog 6 (495 aa).

A compositionally biased stretch (basic residues) spans 1-15; that stretch reads MFRSKRSGLVRRLWR. Disordered regions lie at residues 1–115 and 133–161; these read MFRS…PGWL and AAGA…RSRE. Arginine 74 and arginine 81 each carry dimethylated arginine; alternate. 2 positions are modified to omega-N-methylarginine; alternate: arginine 74 and arginine 81. One can recognise an MH1 domain in the interval 149-276; it reads PEPEEGGGPR…FSRLCGPESP (128 aa). Lysine 174 participates in a covalent cross-link: Glycyl lysine isopeptide (Lys-Gly) (interchain with G-Cter in ubiquitin). Cysteine 206, cysteine 248, cysteine 261, and histidine 266 together coordinate Zn(2+). An MH2 domain is found at 332 to 495; that stretch reads WCSVAYWEHR…WLEILLNNHR (164 aa). Phosphoserine; by PRKX; in vitro is present on serine 436.

This sequence belongs to the dwarfin/SMAD family. As to quaternary structure, interacts with NEDD4L. Interacts with WWP1. Interacts with STAMBP and PRKX. Interacts with RNF111 and AXIN1. Interacts with TGF-beta type I receptor superfamily members, including ACVR1B, BMPR1B and TGFBR1. In response to BMP2 treatment, interacts with SMAD1; this interaction may inhibit SMAD1-binding to SMAD4. Interacts with HOXC8 and HOXC9. Interacts with PELI1; this interaction interferes with PELI1 complex formation with TRAF6, IRAK1, IRAK4 and MYD88 in response to IL1B and hence negatively regulates IL1R-TLR signaling. Interacts with TSC22D1/TSC-22. In terms of processing, monoubiquitinated at Lys-174 by the E2/E3 hybrid ubiquitin-protein ligase UBE2O, leading to reduced binding affinity for the activated BMP type I receptor ACVR1/ALK2, thereby enhancing BMP7 and regulating adipocyte differentiation. Ubiquitinated by WWP1. Ubiquitinated by ARK2C, promoting proteasomal degradation, leading to enhance the BMP-Smad signaling. Post-translationally, arginine methylation by PRMT1, which is recruited by BMPR2, initiates BMP-Induced signaling and induces dissociation from the BMPR1B receptor at the cell surface leading to derepress downstream Smad1/Smad5 signaling. Phosphorylated by BMP type 1 receptor kinase and by PRKX. Ubiquitous in various organs, with higher levels in lung.

Its subcellular location is the nucleus. In terms of biological role, transforming growth factor-beta superfamily receptors signaling occurs through the Smad family of intracellular mediators. SMAD6 is an inhibitory Smad (i-Smad) that negatively regulates signaling downstream of type I transforming growth factor-beta. Acts as a mediator of TGF-beta and BMP anti-inflammatory activities. Suppresses IL1R-TLR signaling through its direct interaction with PEL1, preventing NF-kappa-B activation, nuclear transport and NF-kappa-B-mediated expression of pro-inflammatory genes. Blocks the BMP-SMAD1 signaling pathway by competing with SMAD4 for receptor-activated SMAD1-binding. Binds to regulatory elements in target promoter regions. The sequence is that of Mothers against decapentaplegic homolog 6 (Smad6) from Mus musculus (Mouse).